The following is a 177-amino-acid chain: MSRVAKAPVVVPAGVDVKINGQVITIKGKNGELTRTLNDAVEVKHADNALTFGPRDGYVDGWAQAGTARALLNSMVIGVTEGFTKKLQLVGVGYRAAVKGNVVNLSLGFSHPVDHQLPAGITAECPTQTEIVLKGADKQVIGQVAADLRAYRRPEPYKGKGVRYADEVVRTKEAKKK.

It belongs to the universal ribosomal protein uL6 family. Part of the 50S ribosomal subunit.

In terms of biological role, this protein binds to the 23S rRNA, and is important in its secondary structure. It is located near the subunit interface in the base of the L7/L12 stalk, and near the tRNA binding site of the peptidyltransferase center. The polypeptide is Large ribosomal subunit protein uL6 (Citrobacter koseri (strain ATCC BAA-895 / CDC 4225-83 / SGSC4696)).